A 154-amino-acid chain; its full sequence is Histone H2B type F-M (154 aa).

Low complexity predominate over residues 1–18 (MAAASAMAEASSETTSEE). Residues 1–61 (MAAASAMAEA…RGDSFGDSFT (61 aa)) form a disordered region. Residues 34 to 50 (QKQKRRGCRGSRRRHAN) show a composition bias toward basic residues.

It belongs to the histone H2B family. As to quaternary structure, the nucleosome is a histone octamer containing two molecules each of H2A, H2B, H3 and H4 assembled in one H3-H4 heterotetramer and two H2A-H2B heterodimers. The octamer wraps approximately 147 bp of DNA.

It localises to the nucleus. Its subcellular location is the chromosome. Its function is as follows. Core component of nucleosome. Nucleosomes wrap and compact DNA into chromatin, limiting DNA accessibility to the cellular machineries which require DNA as a template. Histones thereby play a central role in transcription regulation, DNA repair, DNA replication and chromosomal stability. DNA accessibility is regulated via a complex set of post-translational modifications of histones, also called histone code, and nucleosome remodeling. The protein is Histone H2B type F-M of Homo sapiens (Human).